Consider the following 286-residue polypeptide: NADPH-dependent 7-cyano-7-deazaguanine reductase (286 aa).

92 to 94 serves as a coordination point for substrate; sequence IES. 94-95 contacts NADPH; the sequence is SK. The active-site Thioimide intermediate is the Cys-194. The Proton donor role is filled by Asp-201. Substrate is bound at residue 233 to 234; the sequence is HE. 262–263 lines the NADPH pocket; it reads RG.

Belongs to the GTP cyclohydrolase I family. QueF type 2 subfamily. As to quaternary structure, homodimer.

It localises to the cytoplasm. It carries out the reaction 7-aminomethyl-7-carbaguanine + 2 NADP(+) = 7-cyano-7-deazaguanine + 2 NADPH + 3 H(+). Its pathway is tRNA modification; tRNA-queuosine biosynthesis. Its function is as follows. Catalyzes the NADPH-dependent reduction of 7-cyano-7-deazaguanine (preQ0) to 7-aminomethyl-7-deazaguanine (preQ1). The polypeptide is NADPH-dependent 7-cyano-7-deazaguanine reductase (Shewanella sp. (strain MR-4)).